Consider the following 428-residue polypeptide: Enolase (428 aa).

Residue Gln162 participates in (2R)-2-phosphoglycerate binding. Glu204 functions as the Proton donor in the catalytic mechanism. Mg(2+) is bound by residues Asp241, Glu283, and Asp310. Residues Lys335, Arg364, Ser365, and Lys386 each contribute to the (2R)-2-phosphoglycerate site. The active-site Proton acceptor is the Lys335.

Belongs to the enolase family. Mg(2+) serves as cofactor.

It localises to the cytoplasm. It is found in the secreted. The protein localises to the cell surface. It catalyses the reaction (2R)-2-phosphoglycerate = phosphoenolpyruvate + H2O. It participates in carbohydrate degradation; glycolysis; pyruvate from D-glyceraldehyde 3-phosphate: step 4/5. Functionally, catalyzes the reversible conversion of 2-phosphoglycerate (2-PG) into phosphoenolpyruvate (PEP). It is essential for the degradation of carbohydrates via glycolysis. The protein is Enolase of Rhodococcus jostii (strain RHA1).